A 160-amino-acid chain; its full sequence is Probable NADH dehydrogenase [ubiquinone] 1 beta subcomplex subunit 2, mitochondrial (160 aa).

Belongs to the complex I NDUFB2 subunit family. Complex I is composed of 45 different subunits.

The protein resides in the mitochondrion inner membrane. Functionally, accessory subunit of the mitochondrial membrane respiratory chain NADH dehydrogenase (Complex I), that is believed not to be involved in catalysis. Complex I functions in the transfer of electrons from NADH to the respiratory chain. The immediate electron acceptor for the enzyme is believed to be ubiquinone. This chain is Probable NADH dehydrogenase [ubiquinone] 1 beta subcomplex subunit 2, mitochondrial, found in Caenorhabditis elegans.